The chain runs to 688 residues: Potassium-transporting ATPase ATP-binding subunit (688 aa).

Helical transmembrane passes span 35–55, 62–82, 219–239, and 260–280; these read VMFV…AMLA, ALFT…ANFA, IALT…CVTL, and VLIA…LSAI. The 4-aspartylphosphate intermediate role is filled by aspartate 313. ATP is bound by residues aspartate 350, glutamate 354, 383 to 390, and lysine 401; that span reads FSAMTRMS. Mg(2+) is bound by residues aspartate 524 and aspartate 528. A run of 3 helical transmembrane segments spans residues 594 to 614, 622 to 642, and 667 to 687; these read FAII…LNIM, AVLS…PLAL, and GLIA…LLIL.

The protein belongs to the cation transport ATPase (P-type) (TC 3.A.3) family. Type IA subfamily. The system is composed of three essential subunits: KdpA, KdpB and KdpC.

The protein localises to the cell inner membrane. The catalysed reaction is K(+)(out) + ATP + H2O = K(+)(in) + ADP + phosphate + H(+). Functionally, part of the high-affinity ATP-driven potassium transport (or Kdp) system, which catalyzes the hydrolysis of ATP coupled with the electrogenic transport of potassium into the cytoplasm. This subunit is responsible for energy coupling to the transport system and for the release of the potassium ions to the cytoplasm. This Photorhabdus laumondii subsp. laumondii (strain DSM 15139 / CIP 105565 / TT01) (Photorhabdus luminescens subsp. laumondii) protein is Potassium-transporting ATPase ATP-binding subunit.